The following is a 111-amino-acid chain: Iron-sulfur cluster insertion protein ErpA (111 aa).

Iron-sulfur cluster contacts are provided by C39, C103, and C105.

The protein belongs to the HesB/IscA family. Homodimer. The cofactor is iron-sulfur cluster.

Required for insertion of 4Fe-4S clusters for at least IspG. The chain is Iron-sulfur cluster insertion protein ErpA from Acinetobacter baumannii (strain SDF).